We begin with the raw amino-acid sequence, 162 residues long: Peptidyl-prolyl cis-trans isomerase (162 aa).

Positions 5–161 (FFDVIANGQP…ARIVIDKCGT (157 aa)) constitute a PPIase cyclophilin-type domain.

It belongs to the cyclophilin-type PPIase family. PPIase A subfamily.

The protein resides in the cytoplasm. The catalysed reaction is [protein]-peptidylproline (omega=180) = [protein]-peptidylproline (omega=0). With respect to regulation, binds cyclosporin A (CsA). CsA mediates some of its effects via an inhibitory action on PPIase. Its function is as follows. PPIases accelerate the folding of proteins. It catalyzes the cis-trans isomerization of proline imidic peptide bonds in oligopeptides. This Schizosaccharomyces pombe (strain 972 / ATCC 24843) (Fission yeast) protein is Peptidyl-prolyl cis-trans isomerase (ppi1).